Consider the following 121-residue polypeptide: Large ribosomal subunit protein uL14c (121 aa).

The protein belongs to the universal ribosomal protein uL14 family. As to quaternary structure, part of the 50S ribosomal subunit.

Its subcellular location is the plastid. It localises to the chloroplast. Functionally, binds to 23S rRNA. This is Large ribosomal subunit protein uL14c from Tetradesmus obliquus (Green alga).